Consider the following 221-residue polypeptide: PKHD-type hydroxylase PMN2A_0775 (221 aa).

In terms of domain architecture, Fe2OG dioxygenase spans 80–174 (LIHGVMFTQS…RHVCVGWIQS (95 aa)). 3 residues coordinate Fe cation: His98, Asp100, and His155. Arg165 lines the 2-oxoglutarate pocket.

Requires Fe(2+) as cofactor. The cofactor is L-ascorbate.

The polypeptide is PKHD-type hydroxylase PMN2A_0775 (Prochlorococcus marinus (strain NATL2A)).